The chain runs to 877 residues: Hopanoid transporter HpnN (877 aa).

The Cytoplasmic portion of the chain corresponds to 1 to 16 (MVTSLIVRLVAWSVRR). A helical transmembrane segment spans residues 17–37 (PVWVVVLSLLIAAFSGVYVAR). The Periplasmic portion of the chain corresponds to 38–279 (HFKINTDISK…FSSVEDGAAL (242 aa)). A helical membrane pass occupies residues 280–295 (NGVVTLLVVFVILWLA). Over 296–299 (LRSK) the chain is Cytoplasmic. Residues 300–323 (RMIASVLVTLFVGLVVTAALGLAM) form a helical membrane-spanning segment. The SSD domain maps to 302–428 (IASVLVTLFV…LTLLPALLRL (127 aa)). The Periplasmic portion of the chain corresponds to 324-332 (VGSLNMISV). The helical transmembrane segment at 333–351 (AFMVLFVGLGVDFSIQYGV) threads the bilayer. Residues 352–373 (KYREERFRDERIDHALIGAAHS) lie on the Cytoplasmic side of the membrane. Residues 374–394 (MGMPLALATTAVAASFFSFIP) traverse the membrane as a helical segment. Over 395 to 399 (TAYRG) the chain is Periplasmic. Residues 400 to 426 (VSELGLIAGVGMFVALLTTLTLLPALL) traverse the membrane as a helical segment. Residues 427–452 (RLFAPPGESKTPGFPWLAPVDDYLDR) are Cytoplasmic-facing. The chain crosses the membrane as a helical span at residues 453 to 472 (HRKPILIGTLAVVIGALPLL). Over 473 to 718 (AFLHFDFNPL…ILHSANTIIS (246 aa)) the chain is Periplasmic. The helical transmembrane segment at 719-739 (AFLHAALWSIISITILLWITL) threads the bilayer. Topologically, residues 740 to 743 (RRFG) are cytoplasmic. The helical transmembrane segment at 744–766 (DVLRTLVPLLVSGIVTLEMCVVL) threads the bilayer. The Periplasmic portion of the chain corresponds to 767–774 (GMSLNFAN). Residues 775–794 (IIALPLMLGVGVAFKVYFVM) form a helical membrane-spanning segment. The Cytoplasmic segment spans residues 795-809 (AWRAGQTGLLHSSLT). Residues 810–827 (HAVLFSAATTATAFGSLW) traverse the membrane as a helical segment. At 828–836 (LSHHPGTSS) the chain is on the periplasmic side. The helical transmembrane segment at 837–858 (MGKLLALALTCTLIGAVVFQPV) threads the bilayer. The Cytoplasmic portion of the chain corresponds to 859–877 (LMGKPRVKRAKNQSQGINE).

This sequence belongs to the resistance-nodulation-cell division (RND) (TC 2.A.6) family. MmpL subfamily. In terms of assembly, homodimer.

Its subcellular location is the cell inner membrane. Essential for hopanoid transport from the cytoplasmic to the outer membrane. Is capable of shuttling hopanoid lipids from the inner membrane to the periplasm, where they probably spontaneously insert to the inner leaflet of the outer membrane, strengthening the cell envelope. May be a proton-motive-force (PMF)-dependent transporter. Is critical for multidrug resistance and cell wall remodeling in Burkholderia. This Burkholderia multivorans (strain ATCC 17616 / 249) protein is Hopanoid transporter HpnN.